The following is a 392-amino-acid chain: Nicotinate phosphoribosyltransferase (392 aa).

The residue at position 214 (His-214) is a Phosphohistidine; by autocatalysis.

The protein belongs to the NAPRTase family. Transiently phosphorylated on a His residue during the reaction cycle. Phosphorylation strongly increases the affinity for substrates and increases the rate of nicotinate D-ribonucleotide production. Dephosphorylation regenerates the low-affinity form of the enzyme, leading to product release.

The catalysed reaction is nicotinate + 5-phospho-alpha-D-ribose 1-diphosphate + ATP + H2O = nicotinate beta-D-ribonucleotide + ADP + phosphate + diphosphate. It participates in cofactor biosynthesis; NAD(+) biosynthesis; nicotinate D-ribonucleotide from nicotinate: step 1/1. Its function is as follows. Catalyzes the synthesis of beta-nicotinate D-ribonucleotide from nicotinate and 5-phospho-D-ribose 1-phosphate at the expense of ATP. The chain is Nicotinate phosphoribosyltransferase from Xanthomonas axonopodis pv. citri (strain 306).